The primary structure comprises 1166 residues: Serine-aspartate repeat-containing protein E (1166 aa).

Positions 1 to 52 (MINRDNKKAITKKGMISNRLNKFSIRKYTVGTASILVGTTLIFGLGNQEAKA) are cleaved as a signal peptide. A YSIRK-G/S signaling motif motif is present at residues 23–34 (FSIRKYTVGTAS). Positions 53–606 (AENTSTENAK…GDGTVKPEEK (554 aa)) are ligand binding A region. The tract at residues 54–253 (ENTSTENAKQ…HSTKPVATAP (200 aa)) is disordered. A compositionally biased stretch (basic and acidic residues) spans 61 to 75 (AKQDDATTSDNKEVV). Residues 77–90 (ETENNSTTENNSTN) are compositionally biased toward low complexity. Over residues 92 to 108 (IKKETNTDSQPEAKKES) the composition is skewed to basic and acidic residues. Over residues 118–129 (NNVTATTETKPQ) the composition is skewed to polar residues. A compositionally biased stretch (basic and acidic residues) spans 130 to 145 (NIEKENVKPSTDKTAT). Positions 166–178 (TTKPSTSEPSTSE) are enriched in low complexity. Over residues 179–212 (IQTKPTTPQESTNIENSQPQPTPSKVDNQVTDAT) the composition is skewed to polar residues. The span at 221–246 (SKEELKKNPEKLKELVRNDSNTDHST) shows a compositional bias: basic and acidic residues. CNA-B domains lie at 607–719 (LYKI…YKEP), 720–829 (KYNL…YKTP), and 830–940 (KYSL…EEDT). The tract at residues 904–1141 (VTNTTEDDKD…TGSENNGSNN (238 aa)) is disordered. Acidic residues-rich tracts occupy residues 908–918 (TEDDKDADGGE) and 935–1105 (YFEE…DSDS). An LPXTG sorting signal motif is present at residues 1129–1133 (LPETG). A Pentaglycyl murein peptidoglycan amidated threonine modification is found at threonine 1132. The propeptide at 1133-1166 (GSENNGSNNATLFGGLFAALGSLLLFGRRKKQNK) is removed by sortase.

It belongs to the serine-aspartate repeat-containing protein (SDr) family. In terms of assembly, interacts with host complement factor H/CFAH (via C-terminus). Interacts with host complement regulator C4BPA.

It localises to the secreted. The protein resides in the cell wall. Its function is as follows. Cell surface-associated calcium-binding protein which plays an important role in adhesion and pathogenesis. Contributes to the resistance to killing by innate immune components in blood and thus attenuates bacterial clearance by interacting with host complement factor H/CFAH and modulating its activity. Also inhibits bacterial opsonization and killing by interacting with host complement regulator C4BPA and thus inhibiting classical complement pathway activation. This is Serine-aspartate repeat-containing protein E (sdrE) from Staphylococcus aureus (strain COL).